Here is a 91-residue protein sequence, read N- to C-terminus: Small ribosomal subunit protein uS19 (91 aa).

This sequence belongs to the universal ribosomal protein uS19 family.

In terms of biological role, protein S19 forms a complex with S13 that binds strongly to the 16S ribosomal RNA. The sequence is that of Small ribosomal subunit protein uS19 (rpsS) from Mycoplasmopsis pulmonis (strain UAB CTIP) (Mycoplasma pulmonis).